Consider the following 596-residue polypeptide: Arginine--tRNA ligase (596 aa).

Residues 127–137 carry the 'HIGH' region motif; the sequence is ANPTGPVHVGR.

This sequence belongs to the class-I aminoacyl-tRNA synthetase family.

Its subcellular location is the cytoplasm. It catalyses the reaction tRNA(Arg) + L-arginine + ATP = L-arginyl-tRNA(Arg) + AMP + diphosphate. The polypeptide is Arginine--tRNA ligase (Haloquadratum walsbyi (strain DSM 16790 / HBSQ001)).